The chain runs to 271 residues: Putative phosphoenolpyruvate synthase regulatory protein (271 aa).

152–159 serves as a coordination point for ADP; sequence GVSRCGKT.

It belongs to the pyruvate, phosphate/water dikinase regulatory protein family. PSRP subfamily.

The catalysed reaction is [pyruvate, water dikinase] + ADP = [pyruvate, water dikinase]-phosphate + AMP + H(+). It catalyses the reaction [pyruvate, water dikinase]-phosphate + phosphate + H(+) = [pyruvate, water dikinase] + diphosphate. Its function is as follows. Bifunctional serine/threonine kinase and phosphorylase involved in the regulation of the phosphoenolpyruvate synthase (PEPS) by catalyzing its phosphorylation/dephosphorylation. This Legionella pneumophila (strain Paris) protein is Putative phosphoenolpyruvate synthase regulatory protein.